A 39-amino-acid chain; its full sequence is Cytochrome b559 subunit beta (39 aa).

Residues 14–30 traverse the membrane as a helical segment; the sequence is WLAVHGLAVPTVFFLGS. Histidine 18 contributes to the heme binding site.

The protein belongs to the PsbE/PsbF family. Heterodimer of an alpha subunit and a beta subunit. PSII is composed of 1 copy each of membrane proteins PsbA, PsbB, PsbC, PsbD, PsbE, PsbF, PsbH, PsbI, PsbJ, PsbK, PsbL, PsbM, PsbT, PsbX, PsbY, PsbZ, Psb30/Ycf12, at least 3 peripheral proteins of the oxygen-evolving complex and a large number of cofactors. It forms dimeric complexes. It depends on heme b as a cofactor.

It localises to the plastid. The protein localises to the chloroplast thylakoid membrane. This b-type cytochrome is tightly associated with the reaction center of photosystem II (PSII). PSII is a light-driven water:plastoquinone oxidoreductase that uses light energy to abstract electrons from H(2)O, generating O(2) and a proton gradient subsequently used for ATP formation. It consists of a core antenna complex that captures photons, and an electron transfer chain that converts photonic excitation into a charge separation. The chain is Cytochrome b559 subunit beta from Nicotiana glutinosa (Tobacco).